Here is an 86-residue protein sequence, read N- to C-terminus: Large ribosomal subunit protein bL27 (86 aa).

It belongs to the bacterial ribosomal protein bL27 family.

The polypeptide is Large ribosomal subunit protein bL27 (Koribacter versatilis (strain Ellin345)).